A 293-amino-acid chain; its full sequence is Ethanolamine ammonia-lyase small subunit (293 aa).

Adenosylcob(III)alamin is bound by residues Val-207 and Glu-228.

Belongs to the EutC family. In terms of assembly, the basic unit is a heterodimer which dimerizes to form tetramers. The heterotetramers trimerize; 6 large subunits form a core ring with 6 small subunits projecting outwards. Requires adenosylcob(III)alamin as cofactor.

The protein resides in the bacterial microcompartment. The enzyme catalyses ethanolamine = acetaldehyde + NH4(+). It functions in the pathway amine and polyamine degradation; ethanolamine degradation. In terms of biological role, catalyzes the deamination of various vicinal amino-alcohols to oxo compounds. Allows this organism to utilize ethanolamine as the sole source of nitrogen and carbon in the presence of external vitamin B12. In Listeria monocytogenes serotype 4a (strain HCC23), this protein is Ethanolamine ammonia-lyase small subunit.